Here is a 209-residue protein sequence, read N- to C-terminus: Thymidine kinase (209 aa).

ATP is bound by residues 9 to 16 (AAMNAGKS) and 88 to 91 (DEAQ). Glutamate 89 (proton acceptor) is an active-site residue. Residues cysteine 146, cysteine 148, cysteine 183, and histidine 186 each contribute to the Zn(2+) site.

This sequence belongs to the thymidine kinase family. In terms of assembly, homotetramer.

Its subcellular location is the cytoplasm. It catalyses the reaction thymidine + ATP = dTMP + ADP + H(+). The protein is Thymidine kinase of Legionella pneumophila (strain Paris).